A 415-amino-acid polypeptide reads, in one-letter code: Serine hydroxymethyltransferase (415 aa).

(6S)-5,6,7,8-tetrahydrofolate-binding positions include Leu-115 and 119–121; that span reads GHL. N6-(pyridoxal phosphate)lysine is present on Lys-224. (6S)-5,6,7,8-tetrahydrofolate is bound at residue 348-350; it reads SPF.

This sequence belongs to the SHMT family. Homodimer. The cofactor is pyridoxal 5'-phosphate.

The protein localises to the cytoplasm. The enzyme catalyses (6R)-5,10-methylene-5,6,7,8-tetrahydrofolate + glycine + H2O = (6S)-5,6,7,8-tetrahydrofolate + L-serine. Its pathway is one-carbon metabolism; tetrahydrofolate interconversion. It participates in amino-acid biosynthesis; glycine biosynthesis; glycine from L-serine: step 1/1. In terms of biological role, catalyzes the reversible interconversion of serine and glycine with tetrahydrofolate (THF) serving as the one-carbon carrier. This reaction serves as the major source of one-carbon groups required for the biosynthesis of purines, thymidylate, methionine, and other important biomolecules. Also exhibits THF-independent aldolase activity toward beta-hydroxyamino acids, producing glycine and aldehydes, via a retro-aldol mechanism. This chain is Serine hydroxymethyltransferase, found in Latilactobacillus sakei subsp. sakei (strain 23K) (Lactobacillus sakei subsp. sakei).